The following is a 391-amino-acid chain: E3 ubiquitin-protein ligase RMND5A (391 aa).

One can recognise a LisH domain in the interval 114 to 146 (SQQILSEVMVEHFFRQGMLDVAEELCQEAGLSI). Residues 153–210 (PFVELNRILEALKVRVLRPALEWAVSNREMLMAQNSSLEFKLHRLYFISLLMGGTVNQ) form the CTLH domain. Residues 336–377 (CPILRQQTTDNNPPMKLVCGHIISRDALNKMFNGSKLKCPYC) form an RING-Gid-type zinc finger.

Identified in the CTLH complex that contains at least RANBP9, MKLN1, MAEA, RMND5A, GID8 and ARMC8.

Its subcellular location is the nucleus. The protein resides in the nucleoplasm. It localises to the cytoplasm. The enzyme catalyses S-ubiquitinyl-[E2 ubiquitin-conjugating enzyme]-L-cysteine + [acceptor protein]-L-lysine = [E2 ubiquitin-conjugating enzyme]-L-cysteine + N(6)-ubiquitinyl-[acceptor protein]-L-lysine.. In terms of biological role, E3 ubiquitin-protein ligase component of the CTLH complex. The polypeptide is E3 ubiquitin-protein ligase RMND5A (rmnd5a) (Xenopus tropicalis (Western clawed frog)).